The following is a 337-amino-acid chain: Transaldolase (337 aa).

Position 115 is an N6-acetyllysine (K115). The active-site Schiff-base intermediate with substrate is the K142. Residue K219 is modified to N6-acetyllysine. A phosphoserine mark is found at S237 and S256. 3 positions are modified to N6-acetyllysine: K269, K286, and K321.

This sequence belongs to the transaldolase family. Type 1 subfamily. In terms of assembly, homodimer.

It localises to the cytoplasm. It catalyses the reaction D-sedoheptulose 7-phosphate + D-glyceraldehyde 3-phosphate = D-erythrose 4-phosphate + beta-D-fructose 6-phosphate. It participates in carbohydrate degradation; pentose phosphate pathway; D-glyceraldehyde 3-phosphate and beta-D-fructose 6-phosphate from D-ribose 5-phosphate and D-xylulose 5-phosphate (non-oxidative stage): step 2/3. Transaldolase is important for the balance of metabolites in the pentose-phosphate pathway. This is Transaldolase (TALDO1) from Bos taurus (Bovine).